The sequence spans 570 residues: Alpha-glucosidase (570 aa).

The active-site Nucleophile is the D206. E263 functions as the Proton donor in the catalytic mechanism.

It belongs to the glycosyl hydrolase 13 family.

The catalysed reaction is Hydrolysis of terminal, non-reducing (1-&gt;4)-linked alpha-D-glucose residues with release of alpha-D-glucose.. The chain is Alpha-glucosidase (MAL2) from Candida albicans (Yeast).